A 341-amino-acid polypeptide reads, in one-letter code: Mitochondrial transcription factor 1 (341 aa).

S-adenosyl-L-methionine-binding residues include L23, E77, D101, and N137.

Belongs to the class I-like SAM-binding methyltransferase superfamily. rRNA adenine N(6)-methyltransferase family.

It is found in the mitochondrion. Its function is as follows. Mitochondrial transcription factor that confers selective promoter recognition on the core subunit of the yeast mitochondrial RNA polymerase. Interacts with DNA in a non-specific manner. The sequence is that of Mitochondrial transcription factor 1 (MTF1) from Saccharomyces paradoxus (Yeast).